Reading from the N-terminus, the 761-residue chain is Cyclin-F (761 aa).

Residues Arg-19–Arg-27 carry the Nuclear localization signal 1 motif. In terms of domain architecture, F-box spans Val-28–Ala-75. One can recognise a Cyclin N-terminal domain in the interval Asn-300–Ile-411. 2 consecutive short sequence motifs (d box) follow at residues Arg-316 to Leu-319 and Arg-355 to Leu-358. Disordered stretches follow at residues Asn-575–Thr-594 and Ala-677–Leu-761. The span at Arg-580–Gly-590 shows a compositional bias: basic and acidic residues. A PEST region spans residues Arg-589–Lys-745. Over residues Ser-691 to Gly-718 the composition is skewed to low complexity. Residues Ala-739–Gln-749 show a composition bias toward basic residues.

Belongs to the cyclin family. Cyclin AB subfamily. As to quaternary structure, component of the SCF(CCNF) complex.

It localises to the nucleus. Its subcellular location is the cytoplasm. The protein localises to the perinuclear region. The protein resides in the cytoskeleton. It is found in the microtubule organizing center. It localises to the centrosome. Its subcellular location is the centriole. Functionally, substrate recognition component of the SCF(CCNF) E3 ubiquitin-protein ligase complex which mediates the ubiquitination and subsequent proteasomal degradation of target proteins. The SCF(CCNF) E3 ubiquitin-protein ligase complex is an integral component of the ubiquitin proteasome system (UPS) and links proteasome degradation to the cell cycle. Mediates the substrate recognition and the proteasomal degradation of various target proteins during G2 phase involved in the regulation of cell cycle progression and in the maintenance of genome stability. In Xenopus laevis (African clawed frog), this protein is Cyclin-F (ccnf).